The primary structure comprises 291 residues: 33 kDa chaperonin (291 aa).

Disulfide bonds link Cys-235-Cys-237 and Cys-268-Cys-271.

The protein belongs to the HSP33 family. Post-translationally, under oxidizing conditions two disulfide bonds are formed involving the reactive cysteines. Under reducing conditions zinc is bound to the reactive cysteines and the protein is inactive.

It localises to the cytoplasm. Redox regulated molecular chaperone. Protects both thermally unfolding and oxidatively damaged proteins from irreversible aggregation. Plays an important role in the bacterial defense system toward oxidative stress. The polypeptide is 33 kDa chaperonin (Bacillus pumilus (strain SAFR-032)).